The primary structure comprises 223 residues: Deoxyribose-phosphate aldolase (223 aa).

Residue Asp91 is the Proton donor/acceptor of the active site. Lys153 serves as the catalytic Schiff-base intermediate with acetaldehyde. Catalysis depends on Lys182, which acts as the Proton donor/acceptor.

The protein belongs to the DeoC/FbaB aldolase family. DeoC type 1 subfamily.

Its subcellular location is the cytoplasm. It catalyses the reaction 2-deoxy-D-ribose 5-phosphate = D-glyceraldehyde 3-phosphate + acetaldehyde. It participates in carbohydrate degradation; 2-deoxy-D-ribose 1-phosphate degradation; D-glyceraldehyde 3-phosphate and acetaldehyde from 2-deoxy-alpha-D-ribose 1-phosphate: step 2/2. Functionally, catalyzes a reversible aldol reaction between acetaldehyde and D-glyceraldehyde 3-phosphate to generate 2-deoxy-D-ribose 5-phosphate. This is Deoxyribose-phosphate aldolase from Streptococcus pyogenes serotype M28 (strain MGAS6180).